The following is a 319-amino-acid chain: ATP-dependent 6-phosphofructokinase (319 aa).

ATP-binding positions include G11, 72-73 (RS), and 102-105 (GDGS). D103 is a Mg(2+) binding site. 126–128 (TID) contacts substrate. The Proton acceptor role is filled by D128. R155 is a binding site for ADP. Substrate contacts are provided by residues R163 and 170-172 (MGR). ADP is bound at residue 186 to 188 (GAE). Substrate is bound by residues E223, R245, and 251 to 254 (HTQR).

The protein belongs to the phosphofructokinase type A (PFKA) family. ATP-dependent PFK group I subfamily. Prokaryotic clade 'B1' sub-subfamily. Homotetramer. Requires Mg(2+) as cofactor.

The protein localises to the cytoplasm. It carries out the reaction beta-D-fructose 6-phosphate + ATP = beta-D-fructose 1,6-bisphosphate + ADP + H(+). The protein operates within carbohydrate degradation; glycolysis; D-glyceraldehyde 3-phosphate and glycerone phosphate from D-glucose: step 3/4. Allosterically activated by ADP and other diphosphonucleosides, and allosterically inhibited by phosphoenolpyruvate. Functionally, catalyzes the phosphorylation of D-fructose 6-phosphate to fructose 1,6-bisphosphate by ATP, the first committing step of glycolysis. The protein is ATP-dependent 6-phosphofructokinase of Sulfurimonas denitrificans (strain ATCC 33889 / DSM 1251) (Thiomicrospira denitrificans (strain ATCC 33889 / DSM 1251)).